The sequence spans 297 residues: N-acetylmuramic acid 6-phosphate etherase (297 aa).

The 164-residue stretch at 55–218 (AAAALKAGGR…STGAMVKLGK (164 aa)) folds into the SIS domain. Glutamate 83 acts as the Proton donor in catalysis. Residue glutamate 114 is part of the active site.

The protein belongs to the GCKR-like family. MurNAc-6-P etherase subfamily. In terms of assembly, homodimer.

It carries out the reaction N-acetyl-D-muramate 6-phosphate + H2O = N-acetyl-D-glucosamine 6-phosphate + (R)-lactate. It functions in the pathway amino-sugar metabolism; 1,6-anhydro-N-acetylmuramate degradation. It participates in amino-sugar metabolism; N-acetylmuramate degradation. The protein operates within cell wall biogenesis; peptidoglycan recycling. Its function is as follows. Specifically catalyzes the cleavage of the D-lactyl ether substituent of MurNAc 6-phosphate, producing GlcNAc 6-phosphate and D-lactate. Together with AnmK, is also required for the utilization of anhydro-N-acetylmuramic acid (anhMurNAc) either imported from the medium or derived from its own cell wall murein, and thus plays a role in cell wall recycling. This Serratia proteamaculans (strain 568) protein is N-acetylmuramic acid 6-phosphate etherase.